Here is a 72-residue protein sequence, read N- to C-terminus: uncharacterized protein (72 aa).

Belongs to the phage portal family. HK97 subfamily.

This is an uncharacterized protein from Rickettsia conorii (strain ATCC VR-613 / Malish 7).